The following is a 363-amino-acid chain: Protein-arginine kinase (363 aa).

The 231-residue stretch at 24-254 folds into the Phosphagen kinase C-terminal domain; the sequence is IVLSSRIRLA…AQLIEQERSA (231 aa). Residues 27–31, His-92, Arg-125, 176–180, and 207–212 each bind ATP; these read SSRIR, RASVM, and RGIYGE. Positions 337-342 match the RDXXRA motif of the pArg binding pocket involved in allosteric regulation motif; it reads RDIRRA.

This sequence belongs to the ATP:guanido phosphotransferase family.

The enzyme catalyses L-arginyl-[protein] + ATP = N(omega)-phospho-L-arginyl-[protein] + ADP + H(+). Appears to be allosterically activated by the binding of pArg-containing polypeptides to the pArg-binding pocket localized in the C-terminal domain of McsB. Its function is as follows. Catalyzes the specific phosphorylation of arginine residues in a large number of proteins. Is part of the bacterial stress response system. Protein arginine phosphorylation has a physiologically important role and is involved in the regulation of many critical cellular processes, such as protein homeostasis, motility, competence, and stringent and stress responses, by regulating gene expression and protein activity. This chain is Protein-arginine kinase, found in Bacillus licheniformis (strain ATCC 14580 / DSM 13 / JCM 2505 / CCUG 7422 / NBRC 12200 / NCIMB 9375 / NCTC 10341 / NRRL NRS-1264 / Gibson 46).